The sequence spans 161 residues: uncharacterized protein (161 aa).

This is an uncharacterized protein from Homo sapiens (Human).